The following is an 85-amino-acid chain: Cell division topological specificity factor (85 aa).

It belongs to the MinE family.

Functionally, prevents the cell division inhibition by proteins MinC and MinD at internal division sites while permitting inhibition at polar sites. This ensures cell division at the proper site by restricting the formation of a division septum at the midpoint of the long axis of the cell. This is Cell division topological specificity factor from Shewanella sp. (strain ANA-3).